A 605-amino-acid polypeptide reads, in one-letter code: Capsid scaffolding protein (605 aa).

Catalysis depends on charge relay system residues histidine 48, serine 116, and histidine 139. Residues 235 to 274 are disordered; that stretch reads ASDAPDLQKPDKALQSPPPASTDPATMLSGNAGEGATACG. The interval 281-300 is interaction with pAP; the sequence is QDLISVPRNTFMTLLQTNLD. 2 disordered regions span residues 403-431 and 489-588; these read DYVP…FPGE and PHQS…KSVS. The Nuclear localization signal motif lies at 410–416; it reads RSNKRKR. The span at 568–579 shows a compositional bias: polar residues; it reads ASASGVAQSKEP. The segment at 585–605 is interaction with major capsid protein; the sequence is KSVSAHLKSIFCEELLNKRVA.

It belongs to the herpesviridae capsid scaffolding protein family. Homomultimer. Interacts with major capsid protein. In terms of assembly, exists in a monomer-dimer equilibrium with the dimer being the active species. Capsid scaffolding protein is cleaved by assemblin after formation of the spherical procapsid. As a result, the capsid obtains its mature, icosahedral shape. Cleavages occur at two or more sites: release (R-site) and maturation (M-site).

It localises to the host cytoplasm. The protein localises to the host nucleus. The catalysed reaction is Cleaves -Ala-|-Ser- and -Ala-|-Ala- bonds in the scaffold protein.. In terms of biological role, acts as a scaffold protein by binding major capsid protein in the cytoplasm, inducing the nuclear localization of both proteins. Multimerizes in the nucleus such as major capsid protein forms the icosahedral T=16 capsid. Autocatalytic cleavage releases the assembly protein, and subsequently abolishes interaction with major capsid protein. Cleavages products are evicted from the capsid before or during DNA packaging. Functionally, protease that plays an essential role in virion assembly within the nucleus. Catalyzes the cleavage of the assembly protein after formation of the spherical procapsid. By that cleavage, the capsid matures and gains its icosahedral shape. The cleavage sites seem to include -Ala-Ser-, -Ala-Ala-, as well as Ala-Thr bonds. Assemblin and cleavages products are evicted from the capsid before or during DNA packaging. Plays a major role in capsid assembly. Acts as a scaffold protein by binding major capsid protein. Multimerizes in the nucleus such as major capsid protein forms the icosahedral T=16 capsid. Cleaved by assemblin after capsid completion. The cleavages products are evicted from the capsid before or during DNA packaging. This is Capsid scaffolding protein from Homo sapiens (Human).